Here is a 432-residue protein sequence, read N- to C-terminus: Enolase (432 aa).

Gln167 contacts (2R)-2-phosphoglycerate. Catalysis depends on Glu209, which acts as the Proton donor. Positions 246, 291, and 318 each coordinate Mg(2+). Residues Lys343, Arg372, Ser373, and Lys394 each contribute to the (2R)-2-phosphoglycerate site. Residue Lys343 is the Proton acceptor of the active site.

Belongs to the enolase family. In terms of assembly, component of the RNA degradosome, a multiprotein complex involved in RNA processing and mRNA degradation. Requires Mg(2+) as cofactor.

Its subcellular location is the cytoplasm. The protein resides in the secreted. It is found in the cell surface. The catalysed reaction is (2R)-2-phosphoglycerate = phosphoenolpyruvate + H2O. It functions in the pathway carbohydrate degradation; glycolysis; pyruvate from D-glyceraldehyde 3-phosphate: step 4/5. Its function is as follows. Catalyzes the reversible conversion of 2-phosphoglycerate (2-PG) into phosphoenolpyruvate (PEP). It is essential for the degradation of carbohydrates via glycolysis. In Pseudoalteromonas translucida (strain TAC 125), this protein is Enolase.